A 196-amino-acid chain; its full sequence is Peptidyl-tRNA hydrolase (196 aa).

Y17 lines the tRNA pocket. The active-site Proton acceptor is H22. The tRNA site is built by Y69, N71, and N117.

The protein belongs to the PTH family. As to quaternary structure, monomer.

It is found in the cytoplasm. It carries out the reaction an N-acyl-L-alpha-aminoacyl-tRNA + H2O = an N-acyl-L-amino acid + a tRNA + H(+). Hydrolyzes ribosome-free peptidyl-tRNAs (with 1 or more amino acids incorporated), which drop off the ribosome during protein synthesis, or as a result of ribosome stalling. Its function is as follows. Catalyzes the release of premature peptidyl moieties from peptidyl-tRNA molecules trapped in stalled 50S ribosomal subunits, and thus maintains levels of free tRNAs and 50S ribosomes. The sequence is that of Peptidyl-tRNA hydrolase from Pseudarthrobacter chlorophenolicus (strain ATCC 700700 / DSM 12829 / CIP 107037 / JCM 12360 / KCTC 9906 / NCIMB 13794 / A6) (Arthrobacter chlorophenolicus).